Consider the following 605-residue polypeptide: Apoptosis-inducing factor 3 (605 aa).

Residues 22–45 (KERGKEELSASGKGSPRAYQGNGT) are disordered. The region spanning 70 to 165 (AAVCHVKDLE…VKIEKEKVYV (96 aa)) is the Rieske domain. 4 residues coordinate [2Fe-2S] cluster: Cys109, His111, Cys128, and His131. Residues 201-205 (GAGAA), Arg235, Lys240, Val270, Asp467, and Trp514 each bind FAD.

This sequence belongs to the FAD-dependent oxidoreductase family. In terms of tissue distribution, ubiquitous. Expressed in bone marrow, cerebral cortex, liver, ovary, thymus, thyroid gland and tongue (at protein level).

It is found in the mitochondrion. Induces apoptosis through a caspase dependent pathway. Reduces mitochondrial membrane potential. This Homo sapiens (Human) protein is Apoptosis-inducing factor 3 (AIFM3).